Here is a 734-residue protein sequence, read N- to C-terminus: Photosystem I P700 chlorophyll a apoprotein A2 (734 aa).

8 helical membrane passes run 46–69, 135–158, 175–199, 273–291, 330–353, 369–395, 417–439, and 517–535; these read IFAS…FHVA, LYSG…LHLQ, LNHH…HVAI, MAHH…GHMY, LHFQ…QHMY, AALY…IFFI, AIIS…LYVH, and FLVH…LILV. Residues Cys559 and Cys568 each coordinate [4Fe-4S] cluster. 2 consecutive transmembrane segments (helical) span residues 575 to 596 and 643 to 665; these read AFYL…YWHW and LSVW…MFLI. The chlorophyll a site is built by His654, Met662, and Tyr670. Trp671 contributes to the phylloquinone binding site. Residues 707-727 traverse the membrane as a helical segment; that stretch reads LVGLAHFSVGYIFTYAAFLIA.

This sequence belongs to the PsaA/PsaB family. The PsaA/B heterodimer binds the P700 chlorophyll special pair and subsequent electron acceptors. PSI consists of a core antenna complex that captures photons, and an electron transfer chain that converts photonic excitation into a charge separation. The eukaryotic PSI reaction center is composed of at least 11 subunits. It depends on P700 is a chlorophyll a/chlorophyll a' dimer, A0 is one or more chlorophyll a, A1 is one or both phylloquinones and FX is a shared 4Fe-4S iron-sulfur center. as a cofactor.

The protein resides in the plastid. It is found in the chloroplast thylakoid membrane. The enzyme catalyses reduced [plastocyanin] + hnu + oxidized [2Fe-2S]-[ferredoxin] = oxidized [plastocyanin] + reduced [2Fe-2S]-[ferredoxin]. Its function is as follows. PsaA and PsaB bind P700, the primary electron donor of photosystem I (PSI), as well as the electron acceptors A0, A1 and FX. PSI is a plastocyanin-ferredoxin oxidoreductase, converting photonic excitation into a charge separation, which transfers an electron from the donor P700 chlorophyll pair to the spectroscopically characterized acceptors A0, A1, FX, FA and FB in turn. Oxidized P700 is reduced on the lumenal side of the thylakoid membrane by plastocyanin. This Antirrhinum majus (Garden snapdragon) protein is Photosystem I P700 chlorophyll a apoprotein A2.